The following is a 261-amino-acid chain: MAGQNARLNVVPTVTMLGVMKARLVGATRGHALLKKKSDALTVQFRALLKKIVTAKESMGDMMKTSSFALTEVKYVAGDNVKHVVLENVKEATLKVRSRTENIAGVKLPKFDHFSEGETKNDLTGLARGGQQVRACRVAYVKAIEVLVELASLQTSFLTLDEAIKTTNRRVNALENVVKPKLENTISYIKGELDELEREDFFRLKKIQGYKRREVERQAANAKEFAEEMVLEDISMQRGISINAARNFLVGGAEKDSDIIF.

Phosphoserine is present on serine 241.

The protein belongs to the V-ATPase D subunit family. In terms of assembly, V-ATPase is a heteromultimeric enzyme composed of a peripheral catalytic V1 complex (components A to H) attached to an integral membrane V0 proton pore complex (components: a, c, c'', d and e).

The protein resides in the vacuole membrane. In terms of biological role, subunit of the peripheral V1 complex of vacuolar ATPase. V-ATPase is responsible for acidifying a variety of intracellular compartments in eukaryotic cells, thus providing most of the energy required for transport processes in the vacuolar system. The polypeptide is V-type proton ATPase subunit D (VHA-D) (Arabidopsis thaliana (Mouse-ear cress)).